Here is a 231-residue protein sequence, read N- to C-terminus: Ribose-5-phosphate isomerase A (231 aa).

Substrate is bound by residues 28-31 (TGST), 83-86 (DGAD), and 96-99 (KGGG). Catalysis depends on E105, which acts as the Proton acceptor. Residue K123 coordinates substrate.

This sequence belongs to the ribose 5-phosphate isomerase family. Homodimer.

The catalysed reaction is aldehydo-D-ribose 5-phosphate = D-ribulose 5-phosphate. The protein operates within carbohydrate degradation; pentose phosphate pathway; D-ribose 5-phosphate from D-ribulose 5-phosphate (non-oxidative stage): step 1/1. Its function is as follows. Catalyzes the reversible conversion of ribose-5-phosphate to ribulose 5-phosphate. In Rhizobium meliloti (strain 1021) (Ensifer meliloti), this protein is Ribose-5-phosphate isomerase A.